The primary structure comprises 312 residues: Protease HtpX homolog (312 aa).

2 helical membrane passes run Thr-6–Gly-26 and Gly-28–Ala-48. His-130 provides a ligand contact to Zn(2+). Residue Glu-131 is part of the active site. His-134 is a binding site for Zn(2+). 2 helical membrane passes run Ile-145 to Gly-165 and Pro-173 to Val-193. Position 202 (Glu-202) interacts with Zn(2+). A compositionally biased stretch (low complexity) spans Pro-287–Gly-297. The disordered stretch occupies residues Pro-287–Gly-312. Over residues Pro-298 to Gly-312 the composition is skewed to gly residues.

This sequence belongs to the peptidase M48B family. The cofactor is Zn(2+).

The protein localises to the cell inner membrane. This chain is Protease HtpX homolog, found in Azorhizobium caulinodans (strain ATCC 43989 / DSM 5975 / JCM 20966 / LMG 6465 / NBRC 14845 / NCIMB 13405 / ORS 571).